The chain runs to 296 residues: tRNA dimethylallyltransferase (296 aa).

2–9 (GPTASGKT) is an ATP binding site. Residue 4-9 (TASGKT) participates in substrate binding. 3 interaction with substrate tRNA regions span residues 27 to 30 (DSAL), 151 to 155 (QRLSR), and 232 to 237 (RCVGYR).

Belongs to the IPP transferase family. In terms of assembly, monomer. Requires Mg(2+) as cofactor.

It catalyses the reaction adenosine(37) in tRNA + dimethylallyl diphosphate = N(6)-dimethylallyladenosine(37) in tRNA + diphosphate. In terms of biological role, catalyzes the transfer of a dimethylallyl group onto the adenine at position 37 in tRNAs that read codons beginning with uridine, leading to the formation of N6-(dimethylallyl)adenosine (i(6)A). The polypeptide is tRNA dimethylallyltransferase (Shewanella sp. (strain MR-4)).